The primary structure comprises 131 residues: Large ribosomal subunit protein bL19 (131 aa).

Belongs to the bacterial ribosomal protein bL19 family.

Functionally, this protein is located at the 30S-50S ribosomal subunit interface and may play a role in the structure and function of the aminoacyl-tRNA binding site. In Afipia carboxidovorans (strain ATCC 49405 / DSM 1227 / KCTC 32145 / OM5) (Oligotropha carboxidovorans), this protein is Large ribosomal subunit protein bL19.